Here is a 607-residue protein sequence, read N- to C-terminus: Phosphomethylpyrimidine synthase (607 aa).

Residues Asn216, Met245, Tyr274, His310, 330–332 (SRG), 371–374 (DGLR), and Glu410 each bind substrate. His414 contributes to the Zn(2+) binding site. Tyr437 is a binding site for substrate. His478 serves as a coordination point for Zn(2+). Residues Cys558, Cys561, and Cys566 each coordinate [4Fe-4S] cluster.

The protein belongs to the ThiC family. As to quaternary structure, homodimer. [4Fe-4S] cluster is required as a cofactor.

The enzyme catalyses 5-amino-1-(5-phospho-beta-D-ribosyl)imidazole + S-adenosyl-L-methionine = 4-amino-2-methyl-5-(phosphooxymethyl)pyrimidine + CO + 5'-deoxyadenosine + formate + L-methionine + 3 H(+). Its pathway is cofactor biosynthesis; thiamine diphosphate biosynthesis. Catalyzes the synthesis of the hydroxymethylpyrimidine phosphate (HMP-P) moiety of thiamine from aminoimidazole ribotide (AIR) in a radical S-adenosyl-L-methionine (SAM)-dependent reaction. This is Phosphomethylpyrimidine synthase from Agrobacterium fabrum (strain C58 / ATCC 33970) (Agrobacterium tumefaciens (strain C58)).